Here is a 324-residue protein sequence, read N- to C-terminus: Glyoxylate/hydroxypyruvate reductase B (324 aa).

Catalysis depends on residues R237 and E266. H285 serves as the catalytic Proton donor.

Belongs to the D-isomer specific 2-hydroxyacid dehydrogenase family. GhrB subfamily. In terms of assembly, homodimer.

The protein localises to the cytoplasm. It carries out the reaction glycolate + NADP(+) = glyoxylate + NADPH + H(+). The catalysed reaction is (R)-glycerate + NAD(+) = 3-hydroxypyruvate + NADH + H(+). It catalyses the reaction (R)-glycerate + NADP(+) = 3-hydroxypyruvate + NADPH + H(+). In terms of biological role, catalyzes the NADPH-dependent reduction of glyoxylate and hydroxypyruvate into glycolate and glycerate, respectively. This Enterobacter sp. (strain 638) protein is Glyoxylate/hydroxypyruvate reductase B.